The primary structure comprises 173 residues: NADH-ubiquinone oxidoreductase chain 6 (173 aa).

The next 6 membrane-spanning stretches (helical) occupy residues methionine 1 to serine 21, phenylalanine 27 to glycine 47, leucine 53 to leucine 73, tryptophan 82 to glycine 102, tyrosine 106 to leucine 126, and glycine 141 to isoleucine 161.

Belongs to the complex I subunit 6 family.

The protein resides in the mitochondrion membrane. The enzyme catalyses a ubiquinone + NADH + 5 H(+)(in) = a ubiquinol + NAD(+) + 4 H(+)(out). Functionally, core subunit of the mitochondrial membrane respiratory chain NADH dehydrogenase (Complex I) that is believed to belong to the minimal assembly required for catalysis. Complex I functions in the transfer of electrons from NADH to the respiratory chain. The immediate electron acceptor for the enzyme is believed to be ubiquinone. In Latimeria chalumnae (Coelacanth), this protein is NADH-ubiquinone oxidoreductase chain 6 (MT-ND6).